An 869-amino-acid polypeptide reads, in one-letter code: AP-3 complex subunit delta (869 aa).

The residue at position 2 (Ser2) is an N-acetylserine. HEAT repeat units follow at residues 33 to 70 (NFISRAVEEIRREIKATDLSTKSTALHKLSYLAALHGV), 107 to 142 (SVMLLITNQVRKDLNSANEYEVSLALECLSRIGTHD), 143 to 179 (LARDLTPEVFTLLGSSKSFVKKKAIGVVLRVFEKYHD), 180 to 216 (AVKVCFKRLVENLETSDPQILSAVVGVFCELATKDPQ), 218 to 254 (CLPLAPEFYKVLVDSRNNWVLIKVLKIFAKLALIEPR), 292 to 329 (AAVKLAVAKIREFLVEDDPNLKYLGLNALSIVAPKHLW), and 330 to 366 (AVLENKEVVVKAMSDEDPNVKLEALHLLMAMVNEDNV). The tract at residues 738-869 (ISQDSFNPKR…EQVIIPDFLL (132 aa)) is disordered. Positions 769 to 780 (ITPQAKTNIQTA) are enriched in polar residues. Residues 815 to 830 (QEKEESSRIENHQNSE) show a composition bias toward basic and acidic residues. The span at 831–850 (KKKKKKKKKKGEGSSKHKSR) shows a compositional bias: basic residues.

This sequence belongs to the adaptor complexes large subunit family. Adaptor protein complex 3 (AP-3) is a heterotetramer composed of two large adaptins (delta-type subunit and beta-type subunit), a medium adaptin (mu-type subunit) and a small adaptin (sigma-type subunit). Binds to EPSIN2.

It is found in the cytoplasm. It localises to the golgi apparatus membrane. Part of the AP-3 complex, an adaptor-related complex which seems to be clathrin-associated. The complex is associated with the Golgi region as well as more peripheral structures. It facilitates the budding of vesicles from the Golgi membrane and may be directly involved in trafficking to the vacuole. It also function in maintaining the identity of lytic vacuoles and in regulating the transition between storage and lytic vacuoles. This is AP-3 complex subunit delta (DELTA-ADR) from Arabidopsis thaliana (Mouse-ear cress).